Consider the following 351-residue polypeptide: Uroporphyrinogen decarboxylase (351 aa).

Residues 26 to 30 (RQAGR), phenylalanine 45, aspartate 76, tyrosine 153, serine 208, and histidine 323 each bind substrate.

It belongs to the uroporphyrinogen decarboxylase family. As to quaternary structure, homodimer.

It localises to the cytoplasm. The enzyme catalyses uroporphyrinogen III + 4 H(+) = coproporphyrinogen III + 4 CO2. It participates in porphyrin-containing compound metabolism; protoporphyrin-IX biosynthesis; coproporphyrinogen-III from 5-aminolevulinate: step 4/4. Its function is as follows. Catalyzes the decarboxylation of four acetate groups of uroporphyrinogen-III to yield coproporphyrinogen-III. This Prochlorococcus marinus (strain SARG / CCMP1375 / SS120) protein is Uroporphyrinogen decarboxylase.